The primary structure comprises 346 residues: N-acetyl-gamma-glutamyl-phosphate reductase (346 aa).

Cys150 is a catalytic residue.

It belongs to the NAGSA dehydrogenase family. Type 1 subfamily.

It is found in the cytoplasm. It carries out the reaction N-acetyl-L-glutamate 5-semialdehyde + phosphate + NADP(+) = N-acetyl-L-glutamyl 5-phosphate + NADPH + H(+). Its pathway is amino-acid biosynthesis; L-arginine biosynthesis; N(2)-acetyl-L-ornithine from L-glutamate: step 3/4. Functionally, catalyzes the NADPH-dependent reduction of N-acetyl-5-glutamyl phosphate to yield N-acetyl-L-glutamate 5-semialdehyde. The polypeptide is N-acetyl-gamma-glutamyl-phosphate reductase (Desulforamulus reducens (strain ATCC BAA-1160 / DSM 100696 / MI-1) (Desulfotomaculum reducens)).